A 276-amino-acid chain; its full sequence is 3beta-hydroxysteroid dehydrogenase (276 aa).

NADP(+)-binding positions include 70–71 (DV), Asn-97, Tyr-162, and Lys-166. Residue Tyr-162 is the Proton acceptor of the active site.

It belongs to the short-chain dehydrogenases/reductases (SDR) family.

It catalyses the reaction 3-oxo-5beta-cholan-24-oate + NADPH + H(+) = isolithocholate + NADP(+). The catalysed reaction is 12alpha-hydroxy-3-oxo-5beta-cholan-24-oate + NADPH + H(+) = isodeoxycholate + NADP(+). It carries out the reaction 12alpha-hydroxy-3-oxo-5beta-cholan-24-oate + NADH + H(+) = isodeoxycholate + NAD(+). The enzyme catalyses 7alpha,12alpha-dihydroxy-3-oxo-5beta-cholan-24-oate + NADPH + H(+) = isocholate + NADP(+). It catalyses the reaction 3-oxochenodeoxycholate + NADPH + H(+) = isochenodeoxycholate + NADP(+). Functionally, involved in the modification of secondary bile acids into iso-bile acids (3beta-bile acids) via epimerization of the 3-OH group through a 3-oxo-intermediate. Catalyzes the reduction of 12-alpha-hydroxy-3-oxo-5-beta-cholan-24-oate (3-oxo-DCA) and 3-oxo-5-beta-cholan-24-oate (3-oxo-LCA) to yield isodeoxycholate (isoDCA) and isolithocholate (isoLCA), respectively. Is also able to catalyze the reduction of 3-dehydrocholate (3-oxo-CA or 7alpha,12alpha-dihydroxy-3-oxo-5beta-cholan-24-oate) and 7-alpha-hydroxy-3-oxo-5-beta-cholan-24-oate (3-oxo-CDCA), into isocholate (isoCA) and isochenodeoxycholate (isoCDCA), respectively. Accepts both NADPH and NADH as cosubstrates. The conversion of the abundant bile acid deoxycholate (DCA) into isoDCA by the gut bacterium R.gnavus favors the growth of the keystone commensal genus Bacteroides, since isoDCA is less cytotoxic than its parent compound, DCA; iso-bile acids have thus a potential role in modulating gut community composition. The polypeptide is 3beta-hydroxysteroid dehydrogenase (Mediterraneibacter gnavus (strain ATCC 29149 / DSM 114966 / JCM 6515 / VPI C7-9) (Ruminococcus gnavus)).